Reading from the N-terminus, the 241-residue chain is Small ribosomal subunit protein uS2 (241 aa).

Belongs to the universal ribosomal protein uS2 family.

This is Small ribosomal subunit protein uS2 from Salmonella agona (strain SL483).